Consider the following 256-residue polypeptide: Imidazole glycerol phosphate synthase subunit HisF (256 aa).

Residues Asp12 and Asp131 contribute to the active site.

Belongs to the HisA/HisF family. In terms of assembly, heterodimer of HisH and HisF.

The protein localises to the cytoplasm. The catalysed reaction is 5-[(5-phospho-1-deoxy-D-ribulos-1-ylimino)methylamino]-1-(5-phospho-beta-D-ribosyl)imidazole-4-carboxamide + L-glutamine = D-erythro-1-(imidazol-4-yl)glycerol 3-phosphate + 5-amino-1-(5-phospho-beta-D-ribosyl)imidazole-4-carboxamide + L-glutamate + H(+). Its pathway is amino-acid biosynthesis; L-histidine biosynthesis; L-histidine from 5-phospho-alpha-D-ribose 1-diphosphate: step 5/9. Functionally, IGPS catalyzes the conversion of PRFAR and glutamine to IGP, AICAR and glutamate. The HisF subunit catalyzes the cyclization activity that produces IGP and AICAR from PRFAR using the ammonia provided by the HisH subunit. The protein is Imidazole glycerol phosphate synthase subunit HisF of Pseudomonas putida (strain GB-1).